The sequence spans 301 residues: uncharacterized protein (301 aa).

Residues 16-28 (EITEESEKTKTDL) show a composition bias toward basic and acidic residues. The interval 16-38 (EITEESEKTKTDLQKANTPNKTE) is disordered. Residues 29–38 (QKANTPNKTE) show a composition bias toward polar residues. One can recognise a G-patch domain in the interval 252 to 301 (KENVALKMLQRCGWKEGQGLGQHNQGIINPLHVEISGFVTETKHSKINDK).

This is an uncharacterized protein from Schizosaccharomyces pombe (strain 972 / ATCC 24843) (Fission yeast).